The chain runs to 330 residues: Solute carrier family 25 member 16 (330 aa).

Solcar repeat units follow at residues 32–118 (FYWL…YKTL), 126–214 (SGHV…LKSV), and 236–326 (LKTH…MKQF). The next 6 membrane-spanning stretches (helical) occupy residues 33-52 (YWLR…KTTV), 95-112 (GAMM…FMAF), 132-149 (LMAG…TYPL), 189-209 (GLMP…FTFG), 242-262 (LLCG…FDVT), and 297-317 (GLYR…AVAF).

Belongs to the mitochondrial carrier (TC 2.A.29) family. In terms of tissue distribution, mostly in thyroid, liver, lung, kidney and to a lesser extent in heart and skeletal muscle.

The protein resides in the mitochondrion inner membrane. May be involved in the transport of coenzyme A in the mitochondrial matrix. Very little is known about the physiological function of this carrier. This Bos taurus (Bovine) protein is Solute carrier family 25 member 16 (SLC25A16).